The sequence spans 1015 residues: Fibronectin-binding protein A (1015 aa).

The N-terminal stretch at Met-1 to Ala-36 is a signal peptide. The YSIRK-G/S signaling motif signature appears at Tyr-7 to Ser-18. Residues Ala-37–Asn-512 form a ligand-binding A region region. A compositionally biased stretch (polar residues) spans Ser-75–Thr-92. The disordered stretch occupies residues Ser-75–Ser-199. Over residues Thr-112–Val-126 the composition is skewed to basic and acidic residues. The span at Thr-129 to Gln-139 shows a compositional bias: polar residues. A compositionally biased stretch (basic and acidic residues) spans Asp-179 to Thr-193. The interval Gly-194–Asn-512 is fibrinogen/elastin/tropoelastin-binding. A fibronectin-binding region spans residues Gly-513–Thr-873. Residues Glu-546 to Ile-575 form a B-1 repeat. Positions Glu-546–Ser-605 are 2 X approximate tandem repeats. One copy of the B-2 repeat lies at Glu-576–Ser-605. 4 disordered regions span residues Gly-596 to His-623, Leu-741 to Asp-815, Glu-828 to Val-953, and Val-966 to Met-992. One copy of the D-1 repeat lies at Gly-746 to Gln-783. Residues Gly-746–Pro-875 form a 4 X approximate tandem repeats region. The span at Pro-780–Ser-791 shows a compositional bias: polar residues. One copy of the D-2 repeat lies at Gly-784–His-821. One copy of the D-3 repeat lies at Gly-822 to Ser-860. Residues Glu-828–Pro-839 show a composition bias toward basic and acidic residues. One copy of the D-4; truncated repeat lies at Gly-861 to Pro-875. Residues Pro-875–Pro-935 are compositionally biased toward pro residues. WR repeat units lie at residues Pro-876 to Thr-889, Pro-890 to Thr-903, Pro-904 to Thr-917, Pro-918 to Lys-931, and Pro-932 to Lys-945. The segment at Pro-876 to Lys-945 is 5 X tandem repeats, Pro-rich (WR). The LPXTG sorting signal motif lies at Leu-979–Gly-983. Pentaglycyl murein peptidoglycan amidated threonine is present on Thr-982. The propeptide at Gly-983 to Ala-1015 is removed by sortase.

The protein localises to the secreted. The protein resides in the cell wall. In terms of biological role, promotes bacterial attachment to multiple substrates, such as fibronectin (Fn), fibrinogen (Fg), elastin peptides and tropoelastin. This confers to S.aureus the ability to invade endothelial cells. Promotes adherence to and aggregation of activated platelets. This Staphylococcus aureus (strain MSSA476) protein is Fibronectin-binding protein A (fnbA).